The following is a 198-amino-acid chain: Ribonuclease HII (198 aa).

One can recognise an RNase H type-2 domain in the interval 2 to 192; the sequence is MYYCGIDEAG…IKKIIDNQKN (191 aa). Positions 8, 9, and 101 each coordinate a divalent metal cation.

This sequence belongs to the RNase HII family. Requires Mn(2+) as cofactor. Mg(2+) serves as cofactor.

Its subcellular location is the cytoplasm. The enzyme catalyses Endonucleolytic cleavage to 5'-phosphomonoester.. Its function is as follows. Endonuclease that specifically degrades the RNA of RNA-DNA hybrids. The sequence is that of Ribonuclease HII from Natranaerobius thermophilus (strain ATCC BAA-1301 / DSM 18059 / JW/NM-WN-LF).